Consider the following 354-residue polypeptide: Protein YGP1 (354 aa).

The signal sequence occupies residues Met1 to Ala19. A propeptide spanning residues Ser20–Lys37 is cleaved from the precursor. N-linked (GlcNAc...) asparagine glycans are attached at residues Asn40, Asn50, Asn53, Asn58, Asn61, Asn65, Asn87, Asn94, Asn100, Asn106, Asn118, Asn172, Asn239, and Asn286. Residues Asn50–Pro354 form the Asparaginase/glutaminase domain.

To yeast sporulation-specific protein SPS100. Post-translationally, extensively N-glycosylated.

The protein resides in the secreted. May be involved in cellular adaptations prior to stationary phase. This chain is Protein YGP1 (YGP1), found in Saccharomyces cerevisiae (strain ATCC 204508 / S288c) (Baker's yeast).